A 105-amino-acid polypeptide reads, in one-letter code: Large ribosomal subunit protein uL24 (105 aa).

This sequence belongs to the universal ribosomal protein uL24 family. Part of the 50S ribosomal subunit.

In terms of biological role, one of two assembly initiator proteins, it binds directly to the 5'-end of the 23S rRNA, where it nucleates assembly of the 50S subunit. One of the proteins that surrounds the polypeptide exit tunnel on the outside of the subunit. This Novosphingobium aromaticivorans (strain ATCC 700278 / DSM 12444 / CCUG 56034 / CIP 105152 / NBRC 16084 / F199) protein is Large ribosomal subunit protein uL24.